Consider the following 90-residue polypeptide: RING finger protein Z (90 aa).

Residue Gly2 is the site of N-myristoyl glycine; by host attachment. The RING-type; atypical zinc-finger motif lies at 32 to 68 (CKSCWQKFDSLVRCHDHYLCRHCLNLLLSVSDRCPLC). The short motif at 85 to 88 (PPPY) is the PPXY motif element.

It belongs to the arenaviridae Z protein family. As to quaternary structure, interacts with protein NP; this interaction probably directs the encapsidated genome to budding sites. Interacts (via RING-type zinc finger) with polymerase L; this interaction inhibits viral transcription and replication, Z partially blocks the product exit tunnel for the releasing nascent RNA product. Interacts with the glycoprotein complex; this interaction plays a role in virion budding. Interacts (via RING-type zinc finger) with host EIF4E; this interaction results in conformational changes of both interacting proteins and reduces EIF4E affinity for its substrate, the 5'-m7 G cap structure. Interacts (via late-budding domain) with host TSG101; this interaction is essential for budding and release of viral particles. Interacts with host RPLP0; this interaction may serve to load ribosome-like particles inside the virion. Interacts with host PML; this interaction induces PML bodies redistribution in the cytoplasm upon viral infection. In terms of processing, myristoylation is required for the role of RING finger protein Z in assembly and budding.

Its subcellular location is the virion. It localises to the host cytoplasm. The protein resides in the host perinuclear region. The protein localises to the host cell membrane. Plays a crucial role in virion assembly and budding. Expressed late in the virus life cycle, it acts as an inhibitor of viral transcription and RNA synthesis by interacting with the viral polymerase L. Presumably recruits the NP encapsidated genome to cellular membranes at budding sites via direct interaction with NP. Plays critical roles in the final steps of viral release by interacting with host TSG101, a member of the vacuolar protein-sorting pathway and using other cellular host proteins involved in vesicle formation pathway. The budding of the virus progeny occurs after association of protein Z with the viral glycoprotein complex SSP-GP1-GP2 at the cell periphery, step that requires myristoylation of protein Z. Also selectively represses protein production by associating with host EIF4E. In cell-based minigenome assay, has an inhibitory effect on the ribonucleoprotein machinery (vRNP), which is responsible for the replication and transcription of the viral genome. In Homo sapiens (Human), this protein is RING finger protein Z.